A 169-amino-acid polypeptide reads, in one-letter code: Der GTPase-activating protein YihI (169 aa).

Disordered regions lie at residues 1-92 (MKPS…EKPM) and 146-169 (SYDDDEEEEEDEKQEDMMRLLRGN). Positions 10–19 (SKGHAKARRK) are enriched in basic residues. Basic and acidic residues predominate over residues 20–30 (TREELDQEARD). Positions 31–40 (RKRQKKRRGH) are enriched in basic residues. Polar residues predominate over residues 49 to 58 (GNTTSGSKGQ). The span at 147–159 (YDDDEEEEEDEKQ) shows a compositional bias: acidic residues. Residues 160-169 (EDMMRLLRGN) are compositionally biased toward basic and acidic residues.

This sequence belongs to the YihI family. As to quaternary structure, interacts with Der.

Its function is as follows. A GTPase-activating protein (GAP) that modifies Der/EngA GTPase function. May play a role in ribosome biogenesis. The chain is Der GTPase-activating protein YihI from Escherichia coli O1:K1 / APEC.